Here is a 260-residue protein sequence, read N- to C-terminus: HTH-type transcriptional repressor NanR (260 aa).

The segment at 1-21 (MSAFDHSSDDTQETIGNSLRR) is disordered. The HTH gntR-type domain occupies 27 to 95 (KKLSEMVEEE…NGERARVSRP (69 aa)). Residues 55–74 (ERELMAFFNVGRPSVREALA) constitute a DNA-binding region (H-T-H motif).

This sequence belongs to the NanR family.

Its function is as follows. Transcriptional repressor that controls expression of the genes required for the catabolism of sialic acids. This Klebsiella aerogenes (strain ATCC 13048 / DSM 30053 / CCUG 1429 / JCM 1235 / KCTC 2190 / NBRC 13534 / NCIMB 10102 / NCTC 10006 / CDC 819-56) (Enterobacter aerogenes) protein is HTH-type transcriptional repressor NanR.